Reading from the N-terminus, the 35-residue chain is Tau/kappa-theraphotoxin-Pc1a (35 aa).

3 disulfide bridges follow: cysteine 3/cysteine 17, cysteine 10/cysteine 22, and cysteine 16/cysteine 29. Position 35 is a phenylalanine amide (phenylalanine 35).

It belongs to the neurotoxin 10 (Hwtx-1) family. 62 (Vatx) subfamily. Expressed by the venom gland.

The protein resides in the secreted. In terms of biological role, selectively activates mammalian TRPV1, the capsaicin receptor, a non-selective cation channel expressed by sensory neurons of the pain pathway. Is less potent than VaTx2 and VaTx3. Interacts with distinct regions of the channel than capsaicin, since it only acts on the extracellular face of the channel, and capsaicin binds to the cytosolic side. Also activates avian TRPV1, which is insensitive to capsaicin. Significantly inhibits potassium channels Kv2.1/KCNB1. In Psalmopoeus cambridgei (Trinidad chevron tarantula), this protein is Tau/kappa-theraphotoxin-Pc1a.